A 79-amino-acid chain; its full sequence is Defensin-1 (79 aa).

The signal sequence occupies residues 1-23; it reads MKFLNVVAIALLVVACLAVYSNA. 3 disulfides stabilise this stretch: Cys-42-Cys-69, Cys-55-Cys-75, and Cys-59-Cys-77.

It belongs to the invertebrate defensin family. Type 1 subfamily.

It localises to the secreted. In Stomoxys calcitrans (Stable fly), this protein is Defensin-1 (SMD1).